Here is a 238-residue protein sequence, read N- to C-terminus: Uracil-DNA glycosylase (238 aa).

The Proton acceptor role is filled by aspartate 72.

The protein belongs to the uracil-DNA glycosylase (UDG) superfamily. UNG family.

It localises to the cytoplasm. The enzyme catalyses Hydrolyzes single-stranded DNA or mismatched double-stranded DNA and polynucleotides, releasing free uracil.. In terms of biological role, excises uracil residues from the DNA which can arise as a result of misincorporation of dUMP residues by DNA polymerase or due to deamination of cytosine. This is Uracil-DNA glycosylase from Chromobacterium violaceum (strain ATCC 12472 / DSM 30191 / JCM 1249 / CCUG 213 / NBRC 12614 / NCIMB 9131 / NCTC 9757 / MK).